Consider the following 374-residue polypeptide: Ribosomal RNA large subunit methyltransferase G (374 aa).

This sequence belongs to the methyltransferase superfamily. RlmG family.

The protein localises to the cytoplasm. The enzyme catalyses guanosine(1835) in 23S rRNA + S-adenosyl-L-methionine = N(2)-methylguanosine(1835) in 23S rRNA + S-adenosyl-L-homocysteine + H(+). Specifically methylates the guanine in position 1835 (m2G1835) of 23S rRNA. The sequence is that of Ribosomal RNA large subunit methyltransferase G from Ectopseudomonas mendocina (strain ymp) (Pseudomonas mendocina).